A 293-amino-acid polypeptide reads, in one-letter code: Ethanolamine ammonia-lyase small subunit (293 aa).

Val-207 and Glu-228 together coordinate adenosylcob(III)alamin.

The protein belongs to the EutC family. In terms of assembly, the basic unit is a heterodimer which dimerizes to form tetramers. The heterotetramers trimerize; 6 large subunits form a core ring with 6 small subunits projecting outwards. Requires adenosylcob(III)alamin as cofactor.

It localises to the bacterial microcompartment. The enzyme catalyses ethanolamine = acetaldehyde + NH4(+). It functions in the pathway amine and polyamine degradation; ethanolamine degradation. Its function is as follows. Catalyzes the deamination of various vicinal amino-alcohols to oxo compounds. Allows this organism to utilize ethanolamine as the sole source of nitrogen and carbon in the presence of external vitamin B12. This is Ethanolamine ammonia-lyase small subunit from Listeria monocytogenes serotype 4b (strain CLIP80459).